The following is a 396-amino-acid chain: Nitrate regulatory protein (396 aa).

Residues 37–284 (GQISALVHML…VDLLNAADAL (248 aa)) form the NIT domain. The 62-residue stretch at 323–384 (LQQLSGQLAS…RMVEIARALL (62 aa)) folds into the ANTAR domain.

Functionally, nitrate- and nitrite-responsive positive regulator for nasFEDCBA operon expression. NasR protein binds to the factor-independent terminator site located in the nasF operon leader RNA to effect transcription antitermination. This chain is Nitrate regulatory protein (nasR), found in Klebsiella oxytoca.